A 765-amino-acid chain; its full sequence is Carboxysome assembly protein CsoS2 (765 aa).

The span at 1-22 (MSTKTSREIALERRKAMSDGGK) shows a compositional bias: basic and acidic residues. Disordered stretches follow at residues 1–107 (MSTK…RTDV) and 165–229 (REAQ…NKNG). Residues 1-215 (MSTKTSREIA…RSKTGSTSKQ (215 aa)) are N-terminal domain. One copy of the N-repeat 1 repeat lies at 7-22 (REIALERRKAMSDGGK). A compositionally biased stretch (polar residues) spans 38-63 (SQDINSTGATSSNKKVLTSPSKSNIP). The span at 77–87 (SSKELGIERRK) shows a compositional bias: basic and acidic residues. 3 N-repeat repeats span residues 79–94 (KELGIERRKAMSTHGK), 158–173 (RDIVLARREAQSKHGK), and 196–211 (REISQRVRELRSKTGS). Over residues 187-207 (RRGDPDLSSREISQRVRELRS) the composition is skewed to basic and acidic residues. The middle region stretch occupies residues 216–586 (GNGKCRPCGP…LSNCETPPND (371 aa)). 6 M-repeat repeats span residues 240-289 (KVGK…GQFC), 300-349 (RASV…KKYC), 358-397 (KVMQSITTDGLKVSGSLPGRSSLVTGDESGSGKQLTGDQY), 411-460 (KVGS…EKFC), 470-519 (KVGL…NDNC), and 530-580 (RATV…LSNC). 2 disordered regions span residues 306–328 (TTSGNKVTGNEVGRSEKVTGDEP) and 367–413 (GLKV…EKVG). The C-terminal domain stretch occupies residues 589–734 (YANQEKSASN…AMPPVDNKRN (146 aa)). C-repeat repeat units follow at residues 604–648 (SVNS…GTEQ) and 677–711 (KKEPSKITGEGQSAGNITGDDWDRGDKVTGTEGVS). 2 disordered regions span residues 611 to 637 (EKYSAKNTEGVTGNRYEDSSKITGPFD) and 656 to 765 (NMTY…GARG). Over residues 730 to 741 (DNKRNDETEKPD) the composition is skewed to basic and acidic residues. Residues 735–765 (DETEKPDFLITGSSGNTRDGQLVTFSGGARG) are C-terminal peptide.

The protein belongs to the CsoS2 family. As to quaternary structure, probably interacts with the carboxysome major shell protein CsoS1 via the N-terminal domain. A CsoS1-CsoS1D-CsoS2 complex can be isolated following expression in E.coli. Interacts via its N-terminal repeats with RuBisCO. Unlike H.neapolitanus and predictions for P.marinus strain MIT 9313, this protein is not thought to have ribosomal frameshifting.

The protein resides in the carboxysome. Its function is as follows. Required for alpha-carboxysome (Cb) assembly, mediates interaction between RuBisCO and the Cb shell. The protein is probably highly flexible. The C-terminal repeats act as the encapsulation signal to target proteins to the Cb; they are necessary and sufficient to target both CsoS2 and foreign proteins to the Cb. The N-terminal repeats of this protein bind simultaneously to both subunits of RuBisCO. Probably also interacts with the major shell proteins (CsoS1); that interaction would increase the local concentration of CsoS2 so that it can condense RuBisCO and full carboxysomes can be formed. There are estimated to be 163 CsoS2 proteins per carboxysome; unlike H.neapolitanus only 1 form is seen. This is Carboxysome assembly protein CsoS2 from Prochlorococcus marinus subsp. pastoris (strain CCMP1986 / NIES-2087 / MED4).